A 252-amino-acid chain; its full sequence is MKPAKVSLLRRLLHSLKHVDCNIAKRFPSTIKIVKLLMIFMVFTPISSIYAEDVYQNFEELKNNEDPSDYGVVTKETGSPVLVLAIHGGGIEGGTSEVARELSKEYSMYLFEGLKSAGNSVLHITSTHFDEPRALKMTGNHEYVISLHGYAEEDQQIEVGGTDRVRAADLVEKLQHAGFPAVLLNMDHPHAGVSPNNIANKSKTGLSIQIEMSTGFRKSLFGIFSLKSRAVTQNERFYEFTEVMFRFLKNSY.

The helical transmembrane segment at 33–51 (IVKLLMIFMVFTPISSIYA) threads the bilayer.

The protein belongs to the UPF0714 family.

The protein resides in the cell membrane. This chain is UPF0714 protein YndL (yndL), found in Bacillus subtilis (strain 168).